The chain runs to 155 residues: MSSEEGKLFVGGLNFNTDEQALEDHFSSFGPISEVVVVKDRETQRSRGFGFITFTNPEHASDVMRAMNGESLDGRQIRVDHAGKSARGTRGGAFGAHGRGRSYSRGGGDQGYGSGRYDSRPGGYGYGYGRSRDYSGSQGGYDRYSGGNYRDNYDN.

The RRM domain maps to 6–84; that stretch reads GKLFVGGLNF…RQIRVDHAGK (79 aa). Residue R47 is modified to Omega-N-methylarginine. Residues 79–155 form a disordered region; sequence VDHAGKSARG…GGNYRDNYDN (77 aa). An Asymmetric dimethylarginine; alternate modification is found at R105. Dimethylated arginine; alternate is present on R105. At R105 the chain carries Omega-N-methylarginine; alternate. The segment covering 105–114 has biased composition (gly residues); that stretch reads RGGGDQGYGS. An omega-N-methylarginine mark is found at R120 and R130. Residues S135 and S145 each carry the phosphoserine modification. At Y153 the chain carries Phosphotyrosine.

In terms of assembly, interacts with RPL4. Associates with the 60S ribosomal subunits. Post-translationally, arg-105 is dimethylated, probably to asymmetric dimethylarginine. In terms of processing, phosphorylated. Isoform 2 is methylated. As to expression, widely expressed in the brain. Highly expressed in the cerebellum and olfactory bulb (at protein level). Expressed in neurons and glial cells.

The protein localises to the nucleus. Its subcellular location is the cytoplasm. The protein resides in the cell projection. It is found in the dendrite. Its function is as follows. Cold-inducible mRNA binding protein that enhances global protein synthesis at both physiological and mild hypothermic temperatures. Reduces the relative abundance of microRNAs, when overexpressed. Enhances phosphorylation of translation initiation factors and active polysome formation. In Rattus norvegicus (Rat), this protein is RNA-binding protein 3 (Rbm3).